The primary structure comprises 242 residues: UPF0173 metal-dependent hydrolase APE_1117 (242 aa).

Belongs to the UPF0173 family.

This is UPF0173 metal-dependent hydrolase APE_1117 from Aeropyrum pernix (strain ATCC 700893 / DSM 11879 / JCM 9820 / NBRC 100138 / K1).